The following is an 836-amino-acid chain: Serine/threonine-protein kinase 1 (836 aa).

A compositionally biased stretch (basic residues) spans 1–12 (MDHNSPKSRRSR). The tract at residues 1–244 (MDHNSPKSRR…SLPDSITRED (244 aa)) is disordered. The span at 28–40 (SDSDSDQGRDRDK) shows a compositional bias: basic and acidic residues. Acidic residues-rich tracts occupy residues 64–75 (DGEGEEDDDDDS), 95–105 (DYDDDDGDESG), and 145–163 (EESS…DDGD). The span at 224–238 (MQQQNSKMSTTSLPD) shows a compositional bias: polar residues. One can recognise a Protein kinase domain in the interval 249 to 503 (YEFLNELGKG…AAEMLKHKFV (255 aa)). Residues 255–263 (LGKGSYGSV) and Lys278 contribute to the ATP site. Catalysis depends on Asp371, which acts as the Proton acceptor. Disordered regions lie at residues 539–571 (LEDT…APLT), 600–640 (EDET…DSWI), and 760–780 (TSSD…PLPP). Residues 562-571 (PQNSTEAPLT) are compositionally biased toward polar residues. A compositionally biased stretch (basic and acidic residues) spans 606-618 (SDSRSQLVREKES).

This sequence belongs to the protein kinase superfamily. STE Ser/Thr protein kinase family. STE20 subfamily. In terms of assembly, interacts with MOB1A and MOB1B via its N-terminal region at the plasma membrane and in the nucleus. Binds to BIK1 to phosphorylate and stabilize it. Interacts with and phosphorylates RBOHD upon flagellin perception to activate it. It depends on Mn(2+) as a cofactor. Post-translationally, autophosphorylates. In terms of tissue distribution, mostly expressed in mature tissues of roots, shoots, hypocotyls, cotyledons, stems, leaves and flowers, as well as in the shoot apical meristem (SAM).

Its subcellular location is the cell membrane. The protein resides in the nucleus. The protein localises to the golgi apparatus. It localises to the trans-Golgi network. It is found in the early endosome. It catalyses the reaction L-seryl-[protein] + ATP = O-phospho-L-seryl-[protein] + ADP + H(+). The catalysed reaction is L-threonyl-[protein] + ATP = O-phospho-L-threonyl-[protein] + ADP + H(+). In terms of biological role, serine/threonine-protein kinase. Regulates organ size in coordination with MOB1A by modulating cell proliferation and cell expansion, possibly by facilitating cell cycle exit. Positive regulator of the pathogen-associated molecular pattern (PAMP, e.g. flg22)-triggered immunity (PTI) signaling by stabilizing BIK1 and activating RBOHD by phosphorylation to promote the extracellular reactive oxygen species (ROS) burst involved in defense responses to bacterial infection. The polypeptide is Serine/threonine-protein kinase 1 (Arabidopsis thaliana (Mouse-ear cress)).